A 176-amino-acid polypeptide reads, in one-letter code: Ribosome maturation factor RimM (176 aa).

The PRC barrel domain occupies 101–174; it reads EGHYYIYQLL…EIRVELPPGL (74 aa).

Belongs to the RimM family. In terms of assembly, binds ribosomal protein uS19.

Its subcellular location is the cytoplasm. An accessory protein needed during the final step in the assembly of 30S ribosomal subunit, possibly for assembly of the head region. Essential for efficient processing of 16S rRNA. May be needed both before and after RbfA during the maturation of 16S rRNA. It has affinity for free ribosomal 30S subunits but not for 70S ribosomes. This Moorella thermoacetica (strain ATCC 39073 / JCM 9320) protein is Ribosome maturation factor RimM.